Consider the following 127-residue polypeptide: Large ribosomal subunit protein bL17 (127 aa).

It belongs to the bacterial ribosomal protein bL17 family. Part of the 50S ribosomal subunit. Contacts protein L32.

The sequence is that of Large ribosomal subunit protein bL17 from Salmonella paratyphi A (strain AKU_12601).